The following is a 247-amino-acid chain: Protein GrpE (247 aa).

2 disordered regions span residues 1-64 and 214-247; these read MNDE…QALD and SMGP…EKSD. Polar residues-rich tracts occupy residues 30–39, 49–63, and 228–241; these read DEPSLSNVAE, DVTS…SQAL, and TEQS…TDQQ.

The protein belongs to the GrpE family. Homodimer.

It localises to the cytoplasm. In terms of biological role, participates actively in the response to hyperosmotic and heat shock by preventing the aggregation of stress-denatured proteins, in association with DnaK and GrpE. It is the nucleotide exchange factor for DnaK and may function as a thermosensor. Unfolded proteins bind initially to DnaJ; upon interaction with the DnaJ-bound protein, DnaK hydrolyzes its bound ATP, resulting in the formation of a stable complex. GrpE releases ADP from DnaK; ATP binding to DnaK triggers the release of the substrate protein, thus completing the reaction cycle. Several rounds of ATP-dependent interactions between DnaJ, DnaK and GrpE are required for fully efficient folding. This is Protein GrpE from Prochlorococcus marinus (strain MIT 9211).